Here is a 310-residue protein sequence, read N- to C-terminus: tRNA dimethylallyltransferase (310 aa).

11–18 (GPTGVGKT) provides a ligand contact to ATP. 13–18 (TGVGKT) is a binding site for substrate.

It belongs to the IPP transferase family. In terms of assembly, monomer. Mg(2+) serves as cofactor.

It carries out the reaction adenosine(37) in tRNA + dimethylallyl diphosphate = N(6)-dimethylallyladenosine(37) in tRNA + diphosphate. Catalyzes the transfer of a dimethylallyl group onto the adenine at position 37 in tRNAs that read codons beginning with uridine, leading to the formation of N6-(dimethylallyl)adenosine (i(6)A). This is tRNA dimethylallyltransferase from Latilactobacillus sakei subsp. sakei (strain 23K) (Lactobacillus sakei subsp. sakei).